Reading from the N-terminus, the 406-residue chain is Purine nucleoside permease (406 aa).

Positions 1–22 (MKLSTLFTLATTISTLTTFTIA) are cleaved as a signal peptide.

The protein belongs to the NUP family. Predicted to be a substrate for cleavage by KEX2.

With respect to regulation, mammalian nucleoside transport inhibitors dipyridamole and NBMPR inhibit adenosine transport by NUP. Nucleoside permease that transports adenosine and guanosine. Does not show any transport activities towards cytidine, adenine, guanine, uridine, and uracil. The polypeptide is Purine nucleoside permease (Candida albicans (strain SC5314 / ATCC MYA-2876) (Yeast)).